Reading from the N-terminus, the 73-residue chain is U3-agatoxin-Ao1k (73 aa).

The N-terminal stretch at 1 to 20 is a signal peptide; it reads MRTIISLLLLSAMVFAVIEA. Residues 21-34 constitute a propeptide that is removed on maturation; that stretch reads ISLEEGLQLFEGER. Intrachain disulfides connect cysteine 36–cysteine 52, cysteine 43–cysteine 57, cysteine 51–cysteine 67, and cysteine 59–cysteine 65. Serine 71 carries the post-translational modification Serine amide.

This sequence belongs to the neurotoxin 07 (Beta/delta-agtx) family. 03 (aga-4) subfamily. Aga sub-subfamily. Expressed by the venom gland.

The protein localises to the secreted. Functionally, insecticidal neurotoxin that modulates the insect Nav channel (DmNaV1/tipE (para/tipE)) in a unique manner, with both the activation and inactivation processes being affected. The voltage dependence of activation is shifted toward more hyperpolarized potentials (analogous to site 4 toxins) and a non-inactivating persistent sodium current is induced (site 3-like action). Interestingly, both effects take place in a voltage-dependent manner, producing a bell-shaped curve between -80 and 0 mV. Compared to beta/delta-agatoxin-1 to -3, this toxin appears to affect the insect sodium channel only weakly. The polypeptide is U3-agatoxin-Ao1k (Agelena orientalis (Funnel-web spider)).